The sequence spans 256 residues: Glucanase inhibitor protein 2 (256 aa).

An N-terminal signal peptide occupies residues Met-1–Gly-15. The region spanning Ile-27–Lys-254 is the Peptidase S1 domain. Cys-54 and Cys-70 are oxidised to a cystine. N-linked (GlcNAc...) asparagine glycosylation is found at Asn-87, Asn-102, Asn-107, and Asn-157. 2 disulfide bridges follow: Cys-177–Cys-189 and Cys-199–Cys-230.

This sequence belongs to the peptidase S1 family. Forms an apoplastic complex with host endoglucanases in tomato leaves during P.infestans infection.

The protein localises to the secreted. Secreted effector that suppresses host plant glucan elicitor-mediated defense responses. Targets host endoglucanases and inhibits the endoglucanase-mediated release of elicitor-active glucan oligosaccharides from P.infestans cell walls. This is Glucanase inhibitor protein 2 from Phytophthora infestans (Potato late blight agent).